Consider the following 475-residue polypeptide: Ribulose bisphosphate carboxylase large chain (475 aa).

The propeptide occupies 1 to 2 (MS). Pro3 carries the post-translational modification N-acetylproline. An N6,N6,N6-trimethyllysine modification is found at Lys14. Residues Asn123 and Thr173 each contribute to the substrate site. Lys175 acts as the Proton acceptor in catalysis. Lys177 provides a ligand contact to substrate. Mg(2+) is bound by residues Lys201, Asp203, and Glu204. At Lys201 the chain carries N6-carboxylysine. His294 (proton acceptor) is an active-site residue. Residues Arg295, His327, and Ser379 each coordinate substrate.

The protein belongs to the RuBisCO large chain family. Type I subfamily. Heterohexadecamer of 8 large chains and 8 small chains; disulfide-linked. The disulfide link is formed within the large subunit homodimers. Mg(2+) is required as a cofactor. Post-translationally, the disulfide bond which can form in the large chain dimeric partners within the hexadecamer appears to be associated with oxidative stress and protein turnover.

Its subcellular location is the plastid. The protein resides in the chloroplast. The catalysed reaction is 2 (2R)-3-phosphoglycerate + 2 H(+) = D-ribulose 1,5-bisphosphate + CO2 + H2O. It carries out the reaction D-ribulose 1,5-bisphosphate + O2 = 2-phosphoglycolate + (2R)-3-phosphoglycerate + 2 H(+). RuBisCO catalyzes two reactions: the carboxylation of D-ribulose 1,5-bisphosphate, the primary event in carbon dioxide fixation, as well as the oxidative fragmentation of the pentose substrate in the photorespiration process. Both reactions occur simultaneously and in competition at the same active site. In Spirogyra maxima (Green alga), this protein is Ribulose bisphosphate carboxylase large chain.